Here is a 109-residue protein sequence, read N- to C-terminus: Nucleoid-associated protein Sputw3181_1707 (109 aa).

The protein belongs to the YbaB/EbfC family. Homodimer.

The protein resides in the cytoplasm. Its subcellular location is the nucleoid. Functionally, binds to DNA and alters its conformation. May be involved in regulation of gene expression, nucleoid organization and DNA protection. The polypeptide is Nucleoid-associated protein Sputw3181_1707 (Shewanella sp. (strain W3-18-1)).